Consider the following 151-residue polypeptide: NAD(P)H-quinone oxidoreductase subunit N (151 aa).

The protein belongs to the complex I NdhN subunit family. NDH-1 can be composed of about 15 different subunits; different subcomplexes with different compositions have been identified which probably have different functions.

Its subcellular location is the cellular thylakoid membrane. It carries out the reaction a plastoquinone + NADH + (n+1) H(+)(in) = a plastoquinol + NAD(+) + n H(+)(out). It catalyses the reaction a plastoquinone + NADPH + (n+1) H(+)(in) = a plastoquinol + NADP(+) + n H(+)(out). Functionally, NDH-1 shuttles electrons from an unknown electron donor, via FMN and iron-sulfur (Fe-S) centers, to quinones in the respiratory and/or the photosynthetic chain. The immediate electron acceptor for the enzyme in this species is believed to be plastoquinone. Couples the redox reaction to proton translocation, and thus conserves the redox energy in a proton gradient. Cyanobacterial NDH-1 also plays a role in inorganic carbon-concentration. The polypeptide is NAD(P)H-quinone oxidoreductase subunit N (Acaryochloris marina (strain MBIC 11017)).